We begin with the raw amino-acid sequence, 71 residues long: Large ribosomal subunit protein bL31 (71 aa).

Residues cysteine 16, cysteine 18, cysteine 37, and cysteine 40 each coordinate Zn(2+).

This sequence belongs to the bacterial ribosomal protein bL31 family. Type A subfamily. As to quaternary structure, part of the 50S ribosomal subunit. Zn(2+) serves as cofactor.

Its function is as follows. Binds the 23S rRNA. This Solidesulfovibrio magneticus (strain ATCC 700980 / DSM 13731 / RS-1) (Desulfovibrio magneticus) protein is Large ribosomal subunit protein bL31.